The following is a 316-amino-acid chain: C-type lectin domain family 10 member A (316 aa).

Residues 1 to 39 lie on the Cytoplasmic side of the membrane; it reads MTRTYENFQYLENKVKVQGFKNGPLPLQSLLQRLCSGPC. The short motif at 5-8 is the Endocytosis signal element; sequence YENF. Residues 40–60 form a helical; Signal-anchor for type II membrane protein membrane-spanning segment; sequence HLLLSLGLGLLLLVIICVVGF. Topologically, residues 61 to 316 are extracellular; that stretch reads QNSKFQRDLV…GLGQTSQESH (256 aa). Residues Asn-78 and Asn-173 are each glycosylated (N-linked (GlcNAc...) asparagine). A coiled-coil region spans residues 85 to 176; that stretch reads AEIQALTSQG…VATLNNNAST (92 aa). Disulfide bonds link Cys-181-Cys-192, Cys-209-Cys-304, and Cys-282-Cys-296. The C-type lectin domain occupies 188-305; that stretch reads HQDSCYWFSH…CQRPYHWVCE (118 aa). The Ca(2+) site is built by Val-218, Asn-220, Glu-224, and Asp-243. 2 residues coordinate a glycoprotein: Gln-267 and Asp-269. Ca(2+) is bound by residues Asp-269, Asp-270, Glu-280, and Asp-281. Glu-280 provides a ligand contact to a glycoprotein. A glycoprotein is bound by residues His-286 and Asn-292. Positions 292, 293, and 305 each coordinate Ca(2+).

Interacts with A-, B- and C-domain containing PTPRC/CD45 isoforms: isoform 1/CD45ABC, isoform 3/CD45AB, isoform 5/CD45BC and isoform 7/CD45B. Does not interact with PTPRC/CD45 isoform 2/CD45RO, a memory T cell marker. As to expression, expressed in myeloid antigen presenting cells in lymph nodes and skin (at protein level). Expressed in dermal dendritic cells (at protein level).

Its subcellular location is the cell membrane. The protein resides in the early endosome membrane. The protein localises to the lysosome membrane. C-type lectin receptor involved in recognition of N-acetylgalactosamine (GalNAc)-terminated glycans by myeloid antigen presenting cells (APCs). Binds in a Ca(2+)-dependent manner to alpha- and beta-linked GalNAc residues on glycoprotein and glycolipid antigens, including alphaGalNAc- and Galbeta1-&gt;3GalNAc-O-Ser/Thr also known as Tn and T antigens, LacdiNAc epitope GalNAcbeta1-&gt;4GlcNAc and its derivative GalNAcbeta1-&gt;4-(Fucalpha1-&gt;3)GlcNAc, O-linked core 5 and 6 glycans, and GM2 and GD2 gangliosides. Acts as a signaling receptor at the interface of APC-T cell interactions. On immature dendritic cells, recognizes Tn antigen-carrying PTPRC/CD45 receptor on effector T cells and downregulates PTRPN/CD45 phosphatase activity with an impact on T cell activation threshold, cytokine production and proliferation. Modulates dendritic cell maturation toward a tolerogenic phenotype leading to generation of regulatory CD4-positive T cell subset with immune suppressive functions. Acts as an endocytic pattern recognition receptor involved in antitumor immunity. During tumorigenesis, recognizes Tn antigens and its sialylated forms Neu5Ac-Tn and Neu5Gc-Tn expressed on tumor cell mucins. On immature dendritic cells, can internalize Tn-terminated immunogens and target them to endolysosomal compartment for MHC class I and II antigen presentation to CD8-positive and CD4-positive T cells, respectively. This chain is C-type lectin domain family 10 member A, found in Homo sapiens (Human).